The sequence spans 559 residues: Subtelomeric hrmA-associated cluster protein AFUB_079030 (559 aa).

Disordered regions lie at residues 163 to 190 (AKHP…TKPE), 298 to 351 (RESN…TGMA), 427 to 451 (SITS…HSAS), and 525 to 559 (FRTG…RPHV). Over residues 169–179 (GGKPPAGAPPG) the composition is skewed to low complexity. 2 stretches are compositionally biased toward basic and acidic residues: residues 180–189 (KKGDPEKTKP) and 300–325 (SNQK…DNAR). Positions 336-346 (NSTSPMSNSAE) are enriched in polar residues.

Its function is as follows. Part of the subtelomeric hrmA-associated cluster (HAC) containing genes that alter the hyphal surface (such as reduced total chitin or increased beta-glucan exposure) and perturb inter-hyphal interactions within the developing biofilms, resulting in a loss of vertically aligned polarized growing filaments. Consequently, this hypoxia-typic morphotype (called H-MORPH) with altered biofilm architecture leads to increased hypoxia fitness, increased host inflammation, rapid disease progression, and mortality in a murine model of invasive aspergillosis. This Aspergillus fumigatus (strain CBS 144.89 / FGSC A1163 / CEA10) (Neosartorya fumigata) protein is Subtelomeric hrmA-associated cluster protein AFUB_079030.